Reading from the N-terminus, the 108-residue chain is RNA silencing suppressor (108 aa).

Residues 47-50 (RRRR) form a basic region. The C4-type zinc finger occupies 57 to 78 (CHRCYRLWPPTVFTTRCDNKHC).

The protein belongs to the carlaviruses nucleic acid-binding protein family.

Its function is as follows. Suppressor of viral-induced RNA silencing. Increases the accumulation of viral RNA and enhances viral cell-to-cell movement by inhibiting RNA silencing. This Solanum tuberosum (Potato) protein is RNA silencing suppressor.